The sequence spans 159 residues: Putative ribosomal RNA large subunit methyltransferase H (159 aa).

S-adenosyl-L-methionine contacts are provided by residues Leu76, Gly108, and 127–132; that span reads FSKMTF.

This sequence belongs to the RNA methyltransferase RlmH family.

It is found in the cytoplasm. It catalyses the reaction pseudouridine(1915) in 23S rRNA + S-adenosyl-L-methionine = N(3)-methylpseudouridine(1915) in 23S rRNA + S-adenosyl-L-homocysteine + H(+). In terms of biological role, specifically methylates the pseudouridine at position 1915 (m3Psi1915) in 23S rRNA. This is Putative ribosomal RNA large subunit methyltransferase H from Methanococcus maripaludis (strain C7 / ATCC BAA-1331).